The following is a 298-amino-acid chain: 4-hydroxybenzoate octaprenyltransferase (298 aa).

The next 7 helical transmembrane spans lie at 30-50 (IGTWLLMWPTLWALWLAAEGI), 54-74 (GTLLIFVIGVYVMRAAGCVVN), 105-125 (VLFAGLVIIAFGLVCLTNLPT), 148-168 (FPQVVLGAAFSWGIPMAFMAI), 218-238 (DRLMIGLLQALTLLLLAWVGL), 240-260 (LALGGFFWLGLAAMGAIFVFQ), and 275-295 (AFLNNHWAGLVVFAGIALSLW).

The protein belongs to the UbiA prenyltransferase family. Requires Mg(2+) as cofactor.

The protein localises to the cell inner membrane. The enzyme catalyses all-trans-octaprenyl diphosphate + 4-hydroxybenzoate = 4-hydroxy-3-(all-trans-octaprenyl)benzoate + diphosphate. Its pathway is cofactor biosynthesis; ubiquinone biosynthesis. Its function is as follows. Catalyzes the prenylation of para-hydroxybenzoate (PHB) with an all-trans polyprenyl group. Mediates the second step in the final reaction sequence of ubiquinone-8 (UQ-8) biosynthesis, which is the condensation of the polyisoprenoid side chain with PHB, generating the first membrane-bound Q intermediate 3-octaprenyl-4-hydroxybenzoate. The polypeptide is 4-hydroxybenzoate octaprenyltransferase (Chromohalobacter salexigens (strain ATCC BAA-138 / DSM 3043 / CIP 106854 / NCIMB 13768 / 1H11)).